The following is a 278-amino-acid chain: ATP synthase subunit delta (278 aa).

The protein belongs to the ATPase delta chain family. F-type ATPases have 2 components, F(1) - the catalytic core - and F(0) - the membrane proton channel. F(1) has five subunits: alpha(3), beta(3), gamma(1), delta(1), epsilon(1). F(0) has three main subunits: a(1), b(2) and c(10-14). The alpha and beta chains form an alternating ring which encloses part of the gamma chain. F(1) is attached to F(0) by a central stalk formed by the gamma and epsilon chains, while a peripheral stalk is formed by the delta and b chains.

It localises to the cell membrane. F(1)F(0) ATP synthase produces ATP from ADP in the presence of a proton or sodium gradient. F-type ATPases consist of two structural domains, F(1) containing the extramembraneous catalytic core and F(0) containing the membrane proton channel, linked together by a central stalk and a peripheral stalk. During catalysis, ATP synthesis in the catalytic domain of F(1) is coupled via a rotary mechanism of the central stalk subunits to proton translocation. In terms of biological role, this protein is part of the stalk that links CF(0) to CF(1). It either transmits conformational changes from CF(0) to CF(1) or is implicated in proton conduction. This chain is ATP synthase subunit delta, found in Bifidobacterium longum (strain DJO10A).